Reading from the N-terminus, the 72-residue chain is Large ribosomal subunit protein uL29 (72 aa).

This sequence belongs to the universal ribosomal protein uL29 family.

This is Large ribosomal subunit protein uL29 from Prochlorococcus marinus (strain MIT 9301).